A 358-amino-acid chain; its full sequence is DNA replication and repair protein RecF (358 aa).

30 to 37 (GNNGSGKT) is an ATP binding site.

This sequence belongs to the RecF family.

Its subcellular location is the cytoplasm. The RecF protein is involved in DNA metabolism; it is required for DNA replication and normal SOS inducibility. RecF binds preferentially to single-stranded, linear DNA. It also seems to bind ATP. The polypeptide is DNA replication and repair protein RecF (Histophilus somni (strain 129Pt) (Haemophilus somnus)).